The following is a 176-amino-acid chain: Calcium and integrin-binding family member 2 (176 aa).

EF-hand domains follow at residues 55-90 (RENP…LCES), 92-127 (PRDL…LTKS), and 133-168 (EVVL…APDF). Residues D105, N107, D109, D116, D146, D148, D150, K152, and D157 each contribute to the Ca(2+) site.

As to quaternary structure, monomer. Homodimer. Interacts with WHRN and MYO7A. Interacts with ITGA2B (via C-terminus cytoplasmic tail region); the interactions are stabilized/increased in a calcium and magnesium-dependent manner. Interacts with ITGA7 (via C-terminus cytoplasmic tail region); the interactions are stabilized/increased in a calcium and magnesium-dependent manner. Interacts with TMC1. Interacts with TMC2. Expressed in liver, heart, kidney, brain, spleen, stomach, ovary, testis and muscle.

The protein resides in the cytoplasm. It is found in the cell projection. It localises to the stereocilium. Its subcellular location is the photoreceptor inner segment. The protein localises to the cilium. The protein resides in the photoreceptor outer segment. It is found in the cell membrane. It localises to the sarcolemma. In terms of biological role, calcium- and integrin-binding protein that plays a role in intracellular calcium homeostasis. Acts as an auxiliary subunit of the sensory mechanoelectrical transduction (MET) channel in hair cells. Essential for mechanoelectrical transduction (MET) currents in auditory hair cells and thereby required for hearing. Regulates the function of hair cell mechanotransduction by controlling the distribution of transmembrane channel-like proteins TMC1 and TMC2, and by regulating the function of the MET channels in hair cells. Required for the maintenance of auditory hair cell stereocilia bundle morphology and function and for hair-cell survival in the cochlea. Critical for proper photoreceptor cell maintenance and function. Plays a role in intracellular calcium homeostasis by decreasing ATP-induced calcium release. The protein is Calcium and integrin-binding family member 2 (CIB2) of Ovis aries (Sheep).